We begin with the raw amino-acid sequence, 444 residues long: Vacuolar protein sorting-associated protein 4B (444 aa).

Positions 4–82 constitute an MIT domain; that stretch reads TSPNLQKAID…KEYLKNKEKK (79 aa). A coiled-coil region spans residues 19 to 82; that stretch reads AQEDKAGNYE…KEYLKNKEKK (64 aa). A compositionally biased stretch (basic and acidic residues) spans 78–88; the sequence is NKEKKAQKPVK. The segment at 78 to 117 is disordered; that stretch reads NKEKKAQKPVKEGQPSPADEKGNDSDGEGESDDPEKKKLQ. 3 positions are modified to phosphoserine: Ser-93, Ser-102, and Ser-108. 174–181 contacts ATP; it reads GPPGTGKS. A Phosphoserine modification is found at Ser-410.

The protein belongs to the AAA ATPase family. In terms of assembly, proposed to be monomeric or homodimeric in nucleotide-free form and to oligomerize upon binding to ATP to form two stacked hexameric or heptameric rings with a central pore through which ESCRT-III substrates are translocated in an ATP-dependent manner. In vitro, associates on the inside of a helical tubular structure formed by a CHMP2A-CHMP3 polymer. Interacts with CHMP1A, CHMP1B, CHMP2A, CHMP4B and CHMP6. Interacts with VPS4A; the interaction suggests a heteromeric assembly with VPS4A. Interacts with VTA1.

It is found in the late endosome membrane. The catalysed reaction is ATP + H2O = ADP + phosphate + H(+). Functionally, involved in late steps of the endosomal multivesicular bodies (MVB) pathway. Recognizes membrane-associated ESCRT-III assemblies and catalyzes their disassembly, possibly in combination with membrane fission. Redistributes the ESCRT-III components to the cytoplasm for further rounds of MVB sorting. MVBs contain intraluminal vesicles (ILVs) that are generated by invagination and scission from the limiting membrane of the endosome and mostly are delivered to lysosomes enabling degradation of membrane proteins, such as stimulated growth factor receptors, lysosomal enzymes and lipids. VPS4A/B are required for the exosomal release of SDCBP, CD63 and syndecan. (Microbial infection) In conjunction with the ESCRT machinery also appears to function in topologically equivalent membrane fission events, such as the terminal stages of cytokinesis and enveloped virus budding (lentiviruses). The polypeptide is Vacuolar protein sorting-associated protein 4B (VPS4B) (Pongo abelii (Sumatran orangutan)).